The primary structure comprises 261 residues: Small ribosomal subunit protein uS2 (261 aa).

Residue Ser-2 is modified to N-acetylserine. Positions 215–261 are disordered; sequence AEEAKTTEDVEEAAPVDADEWTGETEEVDWAESGATPAVEDAAASNW. Acidic residues predominate over residues 223–244; it reads DVEEAAPVDADEWTGETEEVDW.

It belongs to the universal ribosomal protein uS2 family. Component of the small ribosomal subunit. Mature ribosomes consist of a small (40S) and a large (60S) subunit. The 40S subunit contains about 33 different proteins and 1 molecule of RNA (18S). The 60S subunit contains about 49 different proteins and 3 molecules of RNA (25S, 5.8S and 5S). Interacts with RPS21.

The protein localises to the cytoplasm. Functionally, required for the assembly and/or stability of the 40S ribosomal subunit. Required for the processing of the 20S rRNA-precursor to mature 18S rRNA in a late step of the maturation of 40S ribosomal subunits. The sequence is that of Small ribosomal subunit protein uS2 from Scheffersomyces stipitis (strain ATCC 58785 / CBS 6054 / NBRC 10063 / NRRL Y-11545) (Yeast).